The sequence spans 131 residues: Global transcriptional regulator Spx (131 aa).

The cysteines at positions 10 and 13 are disulfide-linked.

The protein belongs to the ArsC family. Spx subfamily. In terms of assembly, interacts with the C-terminal domain of the alpha subunit of the RNAP.

The protein resides in the cytoplasm. Functionally, global transcriptional regulator that plays a key role in stress response and exerts either positive or negative regulation of genes. Acts by interacting with the C-terminal domain of the alpha subunit of the RNA polymerase (RNAP). This interaction can enhance binding of RNAP to the promoter region of target genes and stimulate their transcription, or block interaction of RNAP with activator. The chain is Global transcriptional regulator Spx from Staphylococcus saprophyticus subsp. saprophyticus (strain ATCC 15305 / DSM 20229 / NCIMB 8711 / NCTC 7292 / S-41).